Reading from the N-terminus, the 231-residue chain is U1 small nuclear ribonucleoprotein C-1 (231 aa).

The Matrin-type zinc-finger motif lies at Y4–T36. Composition is skewed to pro residues over residues A117–P127, G134–S159, and L167–S178. The tract at residues A117–H231 is disordered. The segment covering P181 to A193 has biased composition (low complexity). A compositionally biased stretch (pro residues) spans P199–P217.

The protein belongs to the U1 small nuclear ribonucleoprotein C family. In terms of assembly, U1 snRNP is composed of the 7 core Sm proteins B/B', D1, D2, D3, E, F and G that assemble in a heptameric protein ring on the Sm site of the small nuclear RNA to form the core snRNP, and at least 3 U1 snRNP-specific proteins U1-70K, U1-A and U1-C. U1-C interacts with U1 snRNA and the 5' splice-site region of the pre-mRNA.

The protein localises to the nucleus. Component of the spliceosomal U1 snRNP, which is essential for recognition of the pre-mRNA 5' splice-site and the subsequent assembly of the spliceosome. U1-C is directly involved in initial 5' splice-site recognition for both constitutive and regulated alternative splicing. The interaction with the 5' splice-site seems to precede base-pairing between the pre-mRNA and the U1 snRNA. Stimulates commitment or early (E) complex formation by stabilizing the base pairing of the 5' end of the U1 snRNA and the 5' splice-site region. The chain is U1 small nuclear ribonucleoprotein C-1 from Sorghum bicolor (Sorghum).